The chain runs to 543 residues: Ipecac alkaloid beta-glucosidase 3 (543 aa).

Residues Q36, H140, N185–E186, Y350, E422, W471, and F487 each bind a beta-D-glucoside. E186 (proton donor) is an active-site residue. E422 acts as the Nucleophile in catalysis.

The protein belongs to the glycosyl hydrolase 1 family.

It localises to the cytoplasm. It is found in the cytosol. It catalyses the reaction deacetylipecoside + H2O = deacetylipecoside aglycone + D-glucose. The enzyme catalyses deacetylisoipecoside + H2O = deacetylisoipecoside aglycone + D-glucose. It participates in alkaloid biosynthesis. Beta-glucosidase catalyzing deglucosylation on N-deacetylisoipecoside and N-deacetylipecoside. This chain is Ipecac alkaloid beta-glucosidase 3, found in Carapichea ipecacuanha (Ipecac).